We begin with the raw amino-acid sequence, 41 residues long: U-megalopygitoxin(11)-Mo28 (41 aa).

The N-terminal stretch at 1–29 (MRTTLLLLIIAITVMVFVSEAYAAPAPEP) is a signal peptide.

This sequence belongs to the caterpillar 11 family. In terms of tissue distribution, expressed by the venom apparatus.

The protein resides in the secreted. Probable toxin. This is U-megalopygitoxin(11)-Mo28 from Megalopyge opercularis (Southern flannel moth).